Consider the following 612-residue polypeptide: Protein hinderin (612 aa).

Ser-20 is subject to Phosphoserine. The stretch at 90 to 166 (LKDLCLEDKR…CQELLSLYQK (77 aa)) forms a coiled coil. A Phosphoserine modification is found at Ser-178. Positions 362-406 (IEKQLSEDRRQQLMLQKMELEIEKERLQHLLAQQETKLLLKQQQL) form a coiled coil. The span at 462-477 (STSFKKCPDSPNSGQN) shows a compositional bias: polar residues. 2 disordered regions span residues 462-484 (STSF…KKTV) and 509-598 (ETVT…RSPE). Phosphoserine is present on residues Ser-471, Ser-527, and Ser-558. 2 stretches are compositionally biased toward polar residues: residues 555–568 (QSLS…SQPH) and 575–585 (TWSTLRPTPQK).

Interacts (via N- and C-terminal domains) with SMC3 (via central hinge region).

Competes with SMC1 for binding to SMC3. May affect the availability of SMC3 to engage in the formation of multimeric protein complexes. This Mus musculus (Mouse) protein is Protein hinderin (Kiaa1328).